Here is a 79-residue protein sequence, read N- to C-terminus: Sec-independent protein translocase protein TatA (79 aa).

The chain crosses the membrane as a helical span at residues 1–21 (MGSLSIWHWLIVLLIVALVFG). Positions 46–79 (ADAPAAEAQQRELPRNGAVDVEAKEKTPRSGDYR) are disordered. Residues 66-79 (VEAKEKTPRSGDYR) are compositionally biased toward basic and acidic residues.

The protein belongs to the TatA/E family. In terms of assembly, the Tat system comprises two distinct complexes: a TatABC complex, containing multiple copies of TatA, TatB and TatC subunits, and a separate TatA complex, containing only TatA subunits. Substrates initially bind to the TatABC complex, which probably triggers association of the separate TatA complex to form the active translocon.

The protein localises to the cell inner membrane. Its function is as follows. Part of the twin-arginine translocation (Tat) system that transports large folded proteins containing a characteristic twin-arginine motif in their signal peptide across membranes. TatA could form the protein-conducting channel of the Tat system. The protein is Sec-independent protein translocase protein TatA of Paraburkholderia phytofirmans (strain DSM 17436 / LMG 22146 / PsJN) (Burkholderia phytofirmans).